Here is a 504-residue protein sequence, read N- to C-terminus: Maturase K (504 aa).

It belongs to the intron maturase 2 family. MatK subfamily.

The protein localises to the plastid. The protein resides in the chloroplast. Functionally, usually encoded in the trnK tRNA gene intron. Probably assists in splicing its own and other chloroplast group II introns. This chain is Maturase K, found in Matthiola incana (Common stock).